The primary structure comprises 57 residues: uncharacterized protein (57 aa).

The disordered stretch occupies residues 26-57; sequence VVSTRKRLKQNTNTPPHYDTSEDEDEDNYYNY. The span at 46–57 shows a compositional bias: acidic residues; it reads SEDEDEDNYYNY.

This is an uncharacterized protein from Autographa californica nuclear polyhedrosis virus (AcMNPV).